The primary structure comprises 118 residues: Non-specific lipid-transfer protein 1 (118 aa).

An N-terminal signal peptide occupies residues 1-20; the sequence is MARLAVAIAVVAAVVVVLAA. 4 cysteine pairs are disulfide-bonded: Cys29–Cys77, Cys39–Cys54, Cys55–Cys100, and Cys75–Cys114.

This sequence belongs to the plant LTP family.

In terms of biological role, plant non-specific lipid-transfer proteins transfer phospholipids as well as galactolipids across membranes. May play a role in wax or cutin deposition in the cell walls of expanding epidermal cells and certain secretory tissues. In Sorghum bicolor (Sorghum), this protein is Non-specific lipid-transfer protein 1 (LTP1).